Consider the following 412-residue polypeptide: Nucleoside transporter 1 (412 aa).

Residues 1 to 21 (MSKIKESSSGILGASNNTNKE) form a disordered region. The Cytoplasmic segment spans residues 1–29 (MSKIKESSSGILGASNNTNKESSQKSARS). Positions 7–21 (SSSGILGASNNTNKE) are enriched in polar residues. The chain crosses the membrane as a helical span at residues 30–50 (IALPMTYALIGVSCLNVWNSA). Residues 51 to 56 (LGLNIK) lie on the Extracellular side of the membrane. Residues 57–77 (ITYNIFQMAGLLTSSVLALFV) traverse the membrane as a helical segment. Residues 78-81 (NYPR) are Cytoplasmic-facing. A helical transmembrane segment spans residues 82-102 (VLLPTSLGVLTLLCAGFQIAH). The Extracellular portion of the chain corresponds to 103–114 (QTFSDSAFDTYC). Residues 115 to 135 (LAAFITIGLMAGIAQTIAFAI) traverse the membrane as a helical segment. The Cytoplasmic segment spans residues 136–144 (GTTKESNMS). A helical transmembrane segment spans residues 145-165 (GYISAGIGMSGVLIFCINLIL). The Extracellular segment spans residues 166-181 (DYIVSDEKIYEINKSK). Residues 182–202 (LLCLFSISEIFLIITIVCCVL) traverse the membrane as a helical segment. Residues 203–240 (YIDLFPKNDNNKDSTDIEKAEEKEGRLPLIEIIKDGYK) are Cytoplasmic-facing. A helical membrane pass occupies residues 241 to 261 (AILSIFLVNWLSLQLFPGIGH). Residues 262-271 (KKWQEKHGMT) are Extracellular-facing. A helical membrane pass occupies residues 272–294 (DNNVTIIVGMFQVFDFISRYPPN). Residues 295–310 (FTHIKIFKYFTFSLNT) are Cytoplasmic-facing. Residues 311–331 (LLIGNFLRLLFIPWFVLNAVI) form a helical membrane-spanning segment. Residues 332-343 (SSSFFTNIVQQC) lie on the Extracellular side of the membrane. The chain crosses the membrane as a helical span at residues 344-364 (VCIAALAFTNGWFNTVPFIVF). Topologically, residues 365-382 (VKELKKVKHQKDIETISR) are cytoplasmic. The helical transmembrane segment at 383-403 (IMVVSLFFGLFFGMLTTCLYD) threads the bilayer. Over 404-412 (YFPIGILNN) the chain is Extracellular.

The protein belongs to the SLC29A/ENT transporter (TC 2.A.57) family.

It localises to the cell membrane. The catalysed reaction is inosine(in) = inosine(out). It carries out the reaction adenosine(in) = adenosine(out). It catalyses the reaction hypoxanthine(out) = hypoxanthine(in). The enzyme catalyses guanosine(in) = guanosine(out). The catalysed reaction is guanine(out) = guanine(in). It carries out the reaction thymidine(in) = thymidine(out). It catalyses the reaction uridine(out) = uridine(in). The enzyme catalyses uracil(in) = uracil(out). The catalysed reaction is thymine(out) = thymine(in). It carries out the reaction adenine(out) = adenine(in). It catalyses the reaction cytosine(out) = cytosine(in). The enzyme catalyses xanthine(out) = xanthine(in). In terms of biological role, nucleoside and nucleobase transporter with a broad substrate specificity. The chain is Nucleoside transporter 1 from Plasmodium berghei (strain Anka).